Reading from the N-terminus, the 354-residue chain is MRKIIHIDMDAFYASVEQRDNPELRGKPVAVGYPEARGVVAAASYEARKFGVHSAMPSVTAKRKCPELIFVPHRFDVYRAVSRQIQAIFAEYTPLVEPLSLDEAYLDVTENFRGLKLATEIAEEIRGRIRAETHLTASAGVSYNKFLAKMASDQRKPDGLFVITPKHGPDFVQALPVKKFHGVGPATAEKMKRLGIETGADLKSRDLAFLQQHFGKSGPYFYWIARGIDERKVKPDRIRKSIGAEDTFREDVHDLETARAGLKPLIDKVWHYCEASGIRGKTMTLKVKWADFTQITRSKTIVAPIASVAEMSEIAELLLSPIFPAPKGIRLLGVTLSSLDTVDDRSEPQLALAL.

The UmuC domain occupies 4–184; it reads IIHIDMDAFY…LPVKKFHGVG (181 aa). The Mg(2+) site is built by Asp8 and Asp102. Residue Glu103 is part of the active site.

It belongs to the DNA polymerase type-Y family. As to quaternary structure, monomer. Requires Mg(2+) as cofactor.

The protein resides in the cytoplasm. The catalysed reaction is DNA(n) + a 2'-deoxyribonucleoside 5'-triphosphate = DNA(n+1) + diphosphate. Its function is as follows. Poorly processive, error-prone DNA polymerase involved in untargeted mutagenesis. Copies undamaged DNA at stalled replication forks, which arise in vivo from mismatched or misaligned primer ends. These misaligned primers can be extended by PolIV. Exhibits no 3'-5' exonuclease (proofreading) activity. May be involved in translesional synthesis, in conjunction with the beta clamp from PolIII. The polypeptide is DNA polymerase IV 2 (dinB2) (Rhizobium meliloti (strain 1021) (Ensifer meliloti)).